The following is a 263-amino-acid chain: Phosphate import ATP-binding protein PstB (263 aa).

Residues 17–258 (ISVKNLDFFY…PKRKETEDYI (242 aa)) form the ABC transporter domain. 49–56 (GPSGCGKS) lines the ATP pocket.

This sequence belongs to the ABC transporter superfamily. Phosphate importer (TC 3.A.1.7) family. As to quaternary structure, the complex is composed of two ATP-binding proteins (PstB), two transmembrane proteins (PstC and PstA) and a solute-binding protein (PstS).

The protein resides in the cell inner membrane. It catalyses the reaction phosphate(out) + ATP + H2O = ADP + 2 phosphate(in) + H(+). Its function is as follows. Part of the ABC transporter complex PstSACB involved in phosphate import. Responsible for energy coupling to the transport system. This Polaromonas sp. (strain JS666 / ATCC BAA-500) protein is Phosphate import ATP-binding protein PstB.